The chain runs to 454 residues: NADP-specific glutamate dehydrogenase 1 (454 aa).

Residue S2 is modified to N-acetylserine. Residue K110 is part of the active site. 174–203 (GVLTGKGLNWGGSLIRPEATGYGLVYYTQA) contacts NAD(+). Glycyl lysine isopeptide (Lys-Gly) (interchain with G-Cter in ubiquitin) cross-links involve residues K325, K371, and K433.

The protein belongs to the Glu/Leu/Phe/Val dehydrogenases family. As to quaternary structure, homohexamer.

The enzyme catalyses L-glutamate + NADP(+) + H2O = 2-oxoglutarate + NH4(+) + NADPH + H(+). Its function is as follows. Catalyzes the incorporation of an ammonium ion into alpha-ketoglutarate to form L-glutamate, the major route of assimilation of ammonia into an organic form in yeast. The sequence is that of NADP-specific glutamate dehydrogenase 1 from Saccharomyces cerevisiae (strain ATCC 204508 / S288c) (Baker's yeast).